Consider the following 287-residue polypeptide: Urease accessory protein UreD (287 aa).

Belongs to the UreD family. UreD, UreF and UreG form a complex that acts as a GTP-hydrolysis-dependent molecular chaperone, activating the urease apoprotein by helping to assemble the nickel containing metallocenter of UreC. The UreE protein probably delivers the nickel.

It localises to the cytoplasm. Functionally, required for maturation of urease via the functional incorporation of the urease nickel metallocenter. In Ureaplasma parvum serovar 3 (strain ATCC 27815 / 27 / NCTC 11736), this protein is Urease accessory protein UreD.